The primary structure comprises 565 residues: MSWWSSTPSIDEQVEKATSESLPSGESDLALNLEICDLIRSKTVPAKDAMRSLKRRLLNRNPNVQLAALQLTDVCIKNGGSHFLVEIASREFVDPLMAIARNDDANPEVRQRVLQLLQQWAVAFAGQLQLQQVENAVTQLKSEGVSFPSASHDNAAVTSTFIDTKAPPEWIDSDVCMESGVAFSFLNRKHHCRNCGGVFTQACCQNYITLPHFGINVPVRVCNGCFKNLKKGKSDAPIHKPVPGATTTAPSSAPPANSAPNDDEDDIQKAIRLSLQEQESYKPPPPAAATSNDDDEDMKAAIAASLRDMENERQTGQTSASAGGLSSASTTVMAPSLTDLTATEESNINLLSLLVERLKGEPQGTILREPKIQELYDTVGNLRPKLARTMGETISKYDSLVDMHAKMTTVIRYYDALLEEKLNQAYTNRQSGGYAPQPHLSHQMTGQPPHLAPHLTGQITGQPHMGYQHTGQAPYLTGQVTGQAPYLSNQPTGHLTNHYTGSAPSAPQYGGPPAQNVYNAPSYQYSGAPEYDYASSPSAPSAPGGPSAPSAPAQPKEESAPLIEL.

Polar residues predominate over residues 1 to 10 (MSWWSSTPSI). Residues 1-24 (MSWWSSTPSIDEQVEKATSESLPS) are disordered. The 130-residue stretch at 19-148 (SESLPSGESD…QLKSEGVSFP (130 aa)) folds into the VHS domain. The FYVE-type; degenerate zinc finger occupies 170–230 (WIDSDVCMES…VCNGCFKNLK (61 aa)). The Zn(2+) site is built by cysteine 192, cysteine 195, cysteine 222, and cysteine 225. 3 disordered regions span residues 233–296 (KSDA…DDDE), 309–328 (MENERQTGQTSASAGGLSSA), and 429–565 (RQSG…LIEL). The span at 245 to 260 (ATTTAPSSAPPANSAP) shows a compositional bias: low complexity. UIM domains are found at residues 262-281 (DDEDDIQKAIRLSLQEQESY) and 293-312 (DDDEDMKAAIAASLRDMENE). A compositionally biased stretch (low complexity) spans 315-328 (TGQTSASAGGLSSA). 2 stretches are compositionally biased toward polar residues: residues 478 to 505 (GQVTGQAPYLSNQPTGHLTNHYTGSAPS) and 516 to 525 (NVYNAPSYQY). A compositionally biased stretch (low complexity) spans 534 to 553 (ASSPSAPSAPGGPSAPSAPA).

It belongs to the VPS27 family. As to quaternary structure, component of the ESCRT-0 complex composed of HSE1 and VPS27.

The protein resides in the endosome membrane. Functionally, component of the ESCRT-0 complex which is the sorting receptor for ubiquitinated cargo proteins at the multivesicular body (MVB) and recruits ESCRT-I to the MVB outer membrane. This is Vacuolar protein sorting-associated protein 27 (VPS27) from Yarrowia lipolytica (strain CLIB 122 / E 150) (Yeast).